The chain runs to 2784 residues: Cilia- and flagella-associated protein 46 (2784 aa).

A TPR 1 repeat occupies G129–G162. A coiled-coil region spans residues T242–A268. Residues S401–H434 form a TPR 2 repeat. Disordered regions lie at residues S543–E562 and R581–R607. A compositionally biased stretch (pro residues) spans H585–P595. Residues A644–I665 are a coiled coil. The tract at residues R670–T697 is disordered. Residues A708–H743 form a TPR 3 repeat. 2 disordered regions span residues D799–K837 and R929–G954. The span at Q802–G817 shows a compositional bias: acidic residues. The stretch at L976–A1009 is one TPR 4 repeat. A compositionally biased stretch (acidic residues) spans T1275–D1288. Disordered stretches follow at residues T1275–E1351 and A1640–L1673. Over residues S1298–F1311 the composition is skewed to gly residues. Basic and acidic residues predominate over residues G1646–I1658. TPR repeat units lie at residues H1712–C1745 and M1854–R1886. Residues R1961–A1984 are a coiled coil. 4 disordered regions span residues R2068–A2112, A2278–A2303, A2346–A2389, and L2441–T2465. The span at P2069–P2083 shows a compositional bias: pro residues. The span at A2087–P2096 shows a compositional bias: acidic residues. The span at D2097–A2112 shows a compositional bias: low complexity. The span at S2378 to A2389 shows a compositional bias: low complexity. The span at D2450–A2461 shows a compositional bias: basic and acidic residues. The TPR 7 repeat unit spans residues A2613–C2646.

This sequence belongs to the CFAP46 family. As to quaternary structure, part of the PDCP1 complex composed of CFAP46, CFAP54, CFAP74 and CFAP221; the PDCP1 complex binds calmodulin.

It is found in the cytoplasm. The protein localises to the cytoskeleton. The protein resides in the cilium axoneme. Functionally, as part of the central apparatus of the cilium axoneme plays a role in cilium movement and thereby cell motility. This chain is Cilia- and flagella-associated protein 46, found in Chlamydomonas reinhardtii (Chlamydomonas smithii).